The following is a 114-amino-acid chain: T cell receptor beta variable 27 (114 aa).

The signal sequence occupies residues 1 to 21 (MGPQLLGYVVLCLLGAGPLEA). An Ig-like domain is found at 22–114 (QVTQNPRYLI…TSLYFCASSL (93 aa)). Residues Cys42 and Cys110 are joined by a disulfide bond. A glycan (N-linked (GlcNAc...) asparagine) is linked at Asn103.

As to quaternary structure, alpha-beta TR is a heterodimer composed of an alpha and beta chain; disulfide-linked. The alpha-beta TR is associated with the transmembrane signaling CD3 coreceptor proteins to form the TR-CD3 (TcR or TCR). The assembly of alpha-beta TR heterodimers with CD3 occurs in the endoplasmic reticulum where a single alpha-beta TR heterodimer associates with one CD3D-CD3E heterodimer, one CD3G-CD3E heterodimer and one CD247 homodimer forming a stable octameric structure. CD3D-CD3E and CD3G-CD3E heterodimers preferentially associate with TR alpha and TR beta chains, respectively. The association of the CD247 homodimer is the last step of TcR assembly in the endoplasmic reticulum and is required for transport to the cell surface.

The protein resides in the cell membrane. Its function is as follows. V region of the variable domain of T cell receptor (TR) beta chain that participates in the antigen recognition. Alpha-beta T cell receptors are antigen specific receptors which are essential to the immune response and are present on the cell surface of T lymphocytes. Recognize peptide-major histocompatibility (MH) (pMH) complexes that are displayed by antigen presenting cells (APC), a prerequisite for efficient T cell adaptive immunity against pathogens. Binding of alpha-beta TR to pMH complex initiates TR-CD3 clustering on the cell surface and intracellular activation of LCK that phosphorylates the ITAM motifs of CD3G, CD3D, CD3E and CD247 enabling the recruitment of ZAP70. In turn ZAP70 phosphorylates LAT, which recruits numerous signaling molecules to form the LAT signalosome. The LAT signalosome propagates signal branching to three major signaling pathways, the calcium, the mitogen-activated protein kinase (MAPK) kinase and the nuclear factor NF-kappa-B (NF-kB) pathways, leading to the mobilization of transcription factors that are critical for gene expression and essential for T cell growth and differentiation. The T cell repertoire is generated in the thymus, by V-(D)-J rearrangement. This repertoire is then shaped by intrathymic selection events to generate a peripheral T cell pool of self-MH restricted, non-autoaggressive T cells. Post-thymic interaction of alpha-beta TR with the pMH complexes shapes TR structural and functional avidity. The polypeptide is T cell receptor beta variable 27 (Homo sapiens (Human)).